A 578-amino-acid chain; its full sequence is Protein SIA1 (578 aa).

The signal sequence occupies residues 1-28 (MFRNRRILLYARRFFLVWICFLFITSWS).

May be involved in the activation of the plasma membrane proton-ATPase by glucose. In Kluyveromyces lactis (strain ATCC 8585 / CBS 2359 / DSM 70799 / NBRC 1267 / NRRL Y-1140 / WM37) (Yeast), this protein is Protein SIA1 (SIA1).